The sequence spans 299 residues: MNFQDVILTLNNFWAEKGCVLIQSYDTEVGAGTFHPTTLLKALGPEPWKVAYVQPSRRPTDGRYGENPNRLQHYYQYQVIIKPSPSNIQALYIESLKKLGIDPLDHDIRFVEDDWESPTLGASGLGWEVWLDGMEVTQFTYFQMAGSIELKPVSVEITYGLERLCMYLQGVDSVYDLKWNDTITYGDVYHQQEVEQSTYNFEVADTDMLFDFFNKYESEALRIIEKGLVLPAYEFGLKCSHTFNLLDARGAISVTERTGYIGRIRKIARACSNAYVAQREQMGHPLLNRPVKQERKVSK.

This sequence belongs to the class-II aminoacyl-tRNA synthetase family. Tetramer of two alpha and two beta subunits.

It is found in the cytoplasm. The enzyme catalyses tRNA(Gly) + glycine + ATP = glycyl-tRNA(Gly) + AMP + diphosphate. This is Glycine--tRNA ligase alpha subunit from Desulforapulum autotrophicum (strain ATCC 43914 / DSM 3382 / VKM B-1955 / HRM2) (Desulfobacterium autotrophicum).